Reading from the N-terminus, the 351-residue chain is S-adenosylmethionine:tRNA ribosyltransferase-isomerase (351 aa).

It belongs to the QueA family. Monomer.

Its subcellular location is the cytoplasm. The enzyme catalyses 7-aminomethyl-7-carbaguanosine(34) in tRNA + S-adenosyl-L-methionine = epoxyqueuosine(34) in tRNA + adenine + L-methionine + 2 H(+). The protein operates within tRNA modification; tRNA-queuosine biosynthesis. Its function is as follows. Transfers and isomerizes the ribose moiety from AdoMet to the 7-aminomethyl group of 7-deazaguanine (preQ1-tRNA) to give epoxyqueuosine (oQ-tRNA). This chain is S-adenosylmethionine:tRNA ribosyltransferase-isomerase, found in Acinetobacter baumannii (strain SDF).